Consider the following 698-residue polypeptide: Elongation factor G 1 (698 aa).

The region spanning 8-290 (ERYRNIGICA…AVIEFLPSPT (283 aa)) is the tr-type G domain. GTP-binding positions include 17 to 24 (AHVDAGKT), 88 to 92 (DTPGH), and 142 to 145 (NKMD).

Belongs to the TRAFAC class translation factor GTPase superfamily. Classic translation factor GTPase family. EF-G/EF-2 subfamily.

The protein resides in the cytoplasm. Functionally, catalyzes the GTP-dependent ribosomal translocation step during translation elongation. During this step, the ribosome changes from the pre-translocational (PRE) to the post-translocational (POST) state as the newly formed A-site-bound peptidyl-tRNA and P-site-bound deacylated tRNA move to the P and E sites, respectively. Catalyzes the coordinated movement of the two tRNA molecules, the mRNA and conformational changes in the ribosome. In Vibrio cholerae serotype O1 (strain ATCC 39315 / El Tor Inaba N16961), this protein is Elongation factor G 1.